A 229-amino-acid chain; its full sequence is Ribonuclease HII (229 aa).

Positions Trp34–Met223 constitute an RNase H type-2 domain. A divalent metal cation is bound by residues Asp40, Glu41, and Asp131.

The protein belongs to the RNase HII family. It depends on Mn(2+) as a cofactor. Requires Mg(2+) as cofactor.

It localises to the cytoplasm. It catalyses the reaction Endonucleolytic cleavage to 5'-phosphomonoester.. Its function is as follows. Endonuclease that specifically degrades the RNA of RNA-DNA hybrids. This is Ribonuclease HII from Rhizobium leguminosarum bv. trifolii (strain WSM2304).